Here is a 367-residue protein sequence, read N- to C-terminus: 2-aminoethylphosphonate--pyruvate transaminase (367 aa).

An N6-(pyridoxal phosphate)lysine modification is found at lysine 193.

It belongs to the class-V pyridoxal-phosphate-dependent aminotransferase family. PhnW subfamily. In terms of assembly, homodimer. The cofactor is pyridoxal 5'-phosphate.

The enzyme catalyses (2-aminoethyl)phosphonate + pyruvate = phosphonoacetaldehyde + L-alanine. In terms of biological role, involved in phosphonate degradation. The protein is 2-aminoethylphosphonate--pyruvate transaminase of Vibrio vulnificus (strain CMCP6).